The chain runs to 206 residues: NADH-quinone oxidoreductase subunit C (206 aa).

The protein belongs to the complex I 30 kDa subunit family. In terms of assembly, NDH-1 is composed of 14 different subunits. Subunits NuoB, C, D, E, F, and G constitute the peripheral sector of the complex.

The protein resides in the cell inner membrane. It carries out the reaction a quinone + NADH + 5 H(+)(in) = a quinol + NAD(+) + 4 H(+)(out). In terms of biological role, NDH-1 shuttles electrons from NADH, via FMN and iron-sulfur (Fe-S) centers, to quinones in the respiratory chain. The immediate electron acceptor for the enzyme in this species is believed to be ubiquinone. Couples the redox reaction to proton translocation (for every two electrons transferred, four hydrogen ions are translocated across the cytoplasmic membrane), and thus conserves the redox energy in a proton gradient. The sequence is that of NADH-quinone oxidoreductase subunit C from Nitrosomonas europaea (strain ATCC 19718 / CIP 103999 / KCTC 2705 / NBRC 14298).